The primary structure comprises 346 residues: tRNA N6-adenosine threonylcarbamoyltransferase (346 aa).

Fe cation-binding residues include H111 and H115. Residues 134 to 138 (LVSGG), D167, G180, and N279 each bind substrate. D307 provides a ligand contact to Fe cation.

The protein belongs to the KAE1 / TsaD family. The cofactor is Fe(2+).

It is found in the cytoplasm. It carries out the reaction L-threonylcarbamoyladenylate + adenosine(37) in tRNA = N(6)-L-threonylcarbamoyladenosine(37) in tRNA + AMP + H(+). In terms of biological role, required for the formation of a threonylcarbamoyl group on adenosine at position 37 (t(6)A37) in tRNAs that read codons beginning with adenine. Is involved in the transfer of the threonylcarbamoyl moiety of threonylcarbamoyl-AMP (TC-AMP) to the N6 group of A37, together with TsaE and TsaB. TsaD likely plays a direct catalytic role in this reaction. This chain is tRNA N6-adenosine threonylcarbamoyltransferase, found in Burkholderia cenocepacia (strain HI2424).